The sequence spans 247 residues: Phosphatidylserine decarboxylase proenzyme (247 aa).

Catalysis depends on Ser-206, which acts as the Schiff-base intermediate with substrate; via pyruvic acid. Ser-206 is modified (pyruvic acid (Ser); by autocatalysis).

This sequence belongs to the phosphatidylserine decarboxylase family. PSD-A subfamily. In terms of assembly, heterodimer of a large membrane-associated beta subunit and a small pyruvoyl-containing alpha subunit. The cofactor is pyruvate. In terms of processing, is synthesized initially as an inactive proenzyme. Formation of the active enzyme involves a self-maturation process in which the active site pyruvoyl group is generated from an internal serine residue via an autocatalytic post-translational modification. Two non-identical subunits are generated from the proenzyme in this reaction, and the pyruvate is formed at the N-terminus of the alpha chain, which is derived from the carboxyl end of the proenzyme. The post-translation cleavage follows an unusual pathway, termed non-hydrolytic serinolysis, in which the side chain hydroxyl group of the serine supplies its oxygen atom to form the C-terminus of the beta chain, while the remainder of the serine residue undergoes an oxidative deamination to produce ammonia and the pyruvoyl prosthetic group on the alpha chain.

Its subcellular location is the cell membrane. The enzyme catalyses a 1,2-diacyl-sn-glycero-3-phospho-L-serine + H(+) = a 1,2-diacyl-sn-glycero-3-phosphoethanolamine + CO2. Its pathway is phospholipid metabolism; phosphatidylethanolamine biosynthesis; phosphatidylethanolamine from CDP-diacylglycerol: step 2/2. In terms of biological role, catalyzes the formation of phosphatidylethanolamine (PtdEtn) from phosphatidylserine (PtdSer). In Nitrobacter winogradskyi (strain ATCC 25391 / DSM 10237 / CIP 104748 / NCIMB 11846 / Nb-255), this protein is Phosphatidylserine decarboxylase proenzyme.